Reading from the N-terminus, the 614-residue chain is Putative N(6)-adenosine-methyltransferase MT-A70-like (614 aa).

The segment at 59–78 (TPPLTNFNPPKSSSLQQLPQ) is disordered. The span at 67–78 (PPKSSSLQQLPQ) shows a compositional bias: low complexity. S-adenosyl-L-methionine contacts are provided by residues 391–392 (DI) and Asp-409. A positively charged region required for RNA-binding region spans residues 479–492 (RIIRTGRTGHWLNH). Residues Lys-526, 549–552 (RMHN), and 562–563 (NQ) each bind S-adenosyl-L-methionine. Residues 589-614 (PASPSRASAMELDSSVAAQTTTSAMM) are disordered. Polar residues predominate over residues 604–614 (VAAQTTTSAMM).

It belongs to the MT-A70-like family.

The protein resides in the nucleus. It catalyses the reaction an adenosine in mRNA + S-adenosyl-L-methionine = an N(6)-methyladenosine in mRNA + S-adenosyl-L-homocysteine + H(+). Putative N6-methyltransferase that methylates adenosine residues of some mRNAs. N6-methyladenosine (m6A), which is present at internal sites of some mRNAs, may play a role in the efficiency of mRNA splicing, transport or translation. The protein is Putative N(6)-adenosine-methyltransferase MT-A70-like of Medicago truncatula (Barrel medic).